A 359-amino-acid chain; its full sequence is MAAQRLAALHAAAPSAFSSTSSASHGRPAARSSTTALLPVALPRASATLRAAPSRLLPQEAKAAGSGRSVMCMASASASAASAAVASGAAELKAAREDIRELLKTTHCHPILVRLGWHDSGTYDKNIKEWPQRGGANGSLRFDVELKHGANAGLVNALKLVQPIKDKYPNISYADLFQLASATAIEEAGGPKIPMTYGRIDVTGPEQCPPEGKLPDAGPSAPADHLRKVFYRMGLDDKEIVVLSGAHTLGRSRPERSGWGKPETKYTKNGPGAPGGQSWTAEWLKFDNSYFKEIKEKRDQDLLVLPTDAALFEDPTFKVYAEKYAEDQEAFFKDYAGAHAKLSNLGAKFNPPEGFTLDG.

The N-terminal 71 residues, 1 to 71 (MAAQRLAALH…KAAGSGRSVM (71 aa)), are a transit peptide targeting the chloroplast. His-118 serves as the catalytic Proton acceptor. His-247 serves as a coordination point for heme b. A K(+)-binding site is contributed by Thr-248. Positions 251–277 (RSRPERSGWGKPETKYTKNGPGAPGGQ) are disordered. A compositionally biased stretch (basic and acidic residues) spans 252–266 (SRPERSGWGKPETKY). The K(+) site is built by Thr-280 and Asp-287.

This sequence belongs to the peroxidase family. Ascorbate peroxidase subfamily. Heme b is required as a cofactor. Expressed in roots, leaves, stems and flowers.

It localises to the plastid. It is found in the chloroplast stroma. It carries out the reaction L-ascorbate + H2O2 = L-dehydroascorbate + 2 H2O. In terms of biological role, plays a key role in hydrogen peroxide removal. This is Probable L-ascorbate peroxidase 7, chloroplastic from Oryza sativa subsp. japonica (Rice).